Reading from the N-terminus, the 213-residue chain is Protein-L-isoaspartate O-methyltransferase (213 aa).

The active site involves serine 62.

The protein belongs to the methyltransferase superfamily. L-isoaspartyl/D-aspartyl protein methyltransferase family.

The protein localises to the cytoplasm. It carries out the reaction [protein]-L-isoaspartate + S-adenosyl-L-methionine = [protein]-L-isoaspartate alpha-methyl ester + S-adenosyl-L-homocysteine. Functionally, catalyzes the methyl esterification of L-isoaspartyl residues in peptides and proteins that result from spontaneous decomposition of normal L-aspartyl and L-asparaginyl residues. It plays a role in the repair and/or degradation of damaged proteins. The polypeptide is Protein-L-isoaspartate O-methyltransferase (Desulfovibrio desulfuricans (strain ATCC 27774 / DSM 6949 / MB)).